Consider the following 258-residue polypeptide: Large ribosomal subunit protein uL2x (258 aa).

The tract at residues histidine 211–proline 231 is disordered.

The protein belongs to the universal ribosomal protein uL2 family.

This Arabidopsis thaliana (Mouse-ear cress) protein is Large ribosomal subunit protein uL2x (RPL8C).